A 612-amino-acid chain; its full sequence is Methionine--tRNA ligase (612 aa).

Positions 12-22 (PYANGPRHIGH) match the 'HIGH' region motif. Zn(2+) is bound by residues C144, C147, C157, and C160. A 'KMSKS' region motif is present at residues 348–352 (KFSSS). S351 provides a ligand contact to ATP.

It belongs to the class-I aminoacyl-tRNA synthetase family. MetG type 1 subfamily. In terms of assembly, monomer. Requires Zn(2+) as cofactor.

It localises to the cytoplasm. The catalysed reaction is tRNA(Met) + L-methionine + ATP = L-methionyl-tRNA(Met) + AMP + diphosphate. In terms of biological role, is required not only for elongation of protein synthesis but also for the initiation of all mRNA translation through initiator tRNA(fMet) aminoacylation. This Corynebacterium kroppenstedtii (strain DSM 44385 / JCM 11950 / CIP 105744 / CCUG 35717) protein is Methionine--tRNA ligase.